The sequence spans 211 residues: Pyridoxine/pyridoxamine 5'-phosphate oxidase (211 aa).

Residues 7 to 10 (RREY) and Lys65 contribute to the substrate site. FMN is bound by residues 60–65 (RIVLLK), 75–76 (YT), Arg81, Lys82, and Gln104. Residues Tyr122, Arg126, and Ser130 each coordinate substrate. FMN is bound by residues 139–140 (QS) and Trp184. 190–192 (RLH) lines the substrate pocket. Position 194 (Arg194) interacts with FMN.

The protein belongs to the pyridoxamine 5'-phosphate oxidase family. Homodimer. The cofactor is FMN.

It carries out the reaction pyridoxamine 5'-phosphate + O2 + H2O = pyridoxal 5'-phosphate + H2O2 + NH4(+). The enzyme catalyses pyridoxine 5'-phosphate + O2 = pyridoxal 5'-phosphate + H2O2. It functions in the pathway cofactor metabolism; pyridoxal 5'-phosphate salvage; pyridoxal 5'-phosphate from pyridoxamine 5'-phosphate: step 1/1. The protein operates within cofactor metabolism; pyridoxal 5'-phosphate salvage; pyridoxal 5'-phosphate from pyridoxine 5'-phosphate: step 1/1. In terms of biological role, catalyzes the oxidation of either pyridoxine 5'-phosphate (PNP) or pyridoxamine 5'-phosphate (PMP) into pyridoxal 5'-phosphate (PLP). The sequence is that of Pyridoxine/pyridoxamine 5'-phosphate oxidase from Vibrio cholerae serotype O1 (strain ATCC 39541 / Classical Ogawa 395 / O395).